Consider the following 90-residue polypeptide: Small ribosomal subunit protein uS15 (90 aa).

It belongs to the universal ribosomal protein uS15 family. Part of the 30S ribosomal subunit. Forms a bridge to the 50S subunit in the 70S ribosome, contacting the 23S rRNA.

Its function is as follows. One of the primary rRNA binding proteins, it binds directly to 16S rRNA where it helps nucleate assembly of the platform of the 30S subunit by binding and bridging several RNA helices of the 16S rRNA. Functionally, forms an intersubunit bridge (bridge B4) with the 23S rRNA of the 50S subunit in the ribosome. In Wolbachia sp. subsp. Brugia malayi (strain TRS), this protein is Small ribosomal subunit protein uS15.